The primary structure comprises 1286 residues: ABC transporter B family member 4 (1286 aa).

The tract at residues 1–39 (MASESGLNGDPNILEEVSETKRDKEEEEEVKKTEKKDEE) is disordered. The segment covering 18–39 (SETKRDKEEEEEVKKTEKKDEE) has biased composition (basic and acidic residues). A helical membrane pass occupies residues 60-80 (FLLMILGTLGSIGNGLGFPLM). The ABC transmembrane type-1 1 domain occupies 63–349 (MILGTLGSIG…TSPCLSAFAA (287 aa)). N-linked (GlcNAc...) asparagine glycans are attached at residues asparagine 94 and asparagine 97. A run of 5 helical transmembrane segments spans residues 109-129 (FVWL…GWMI), 186-206 (IQLL…GWLL), 208-228 (LVML…AIVI), 288-308 (GLGL…AVWY), and 317-337 (GYTG…SMSL). The region spanning 384-620 (IELKDVYFTY…PEGAYSQLIR (237 aa)) is the ABC transporter 1 domain. 419 to 426 (GQSGSGKS) serves as a coordination point for ATP. N-linked (GlcNAc...) asparagine glycosylation is found at asparagine 500 and asparagine 571. Residues 625-636 (KKSDENAAEEQK) are compositionally biased toward basic and acidic residues. The tract at residues 625-669 (KKSDENAAEEQKMSSIESFKQSSLRKSSLGRSLSKGGSSRGNSSR) is disordered. Residues 646 to 669 (SSLRKSSLGRSLSKGGSSRGNSSR) are compositionally biased toward low complexity. Asparagine 666 carries N-linked (GlcNAc...) asparagine glycosylation. Serine 671 carries the post-translational modification Phosphoserine. Residues 720–1007 (LILGSISAAA…SSSLSPDSSK (288 aa)) form the ABC transmembrane type-1 2 domain. 2 consecutive transmembrane segments (helical) span residues 721 to 741 (ILGS…GILI) and 764 to 784 (IIFM…TFFF). Asparagine 816 and asparagine 846 each carry an N-linked (GlcNAc...) asparagine glycan. Helical transmembrane passes span 850-870 (ILAG…VVLA), 871-891 (MLPL…GFSA), 942-962 (GIVS…SYAA), and 976-996 (TTFD…MAIS). The 238-residue stretch at 1042 to 1279 (IELRHVSFKY…KDGVYASLVQ (238 aa)) folds into the ABC transporter 2 domain. Position 1077 to 1084 (1077 to 1084 (GESGSGKS)) interacts with ATP. N-linked (GlcNAc...) asparagine glycosylation is found at asparagine 1131 and asparagine 1230.

Belongs to the ABC transporter superfamily. ABCB family. Multidrug resistance exporter (TC 3.A.1.201) subfamily. In terms of assembly, interacts with 1-naphthylphthalamic acid (NPA). Phosphorylation level varies significantly during early response to bacterial elicitor. Mostly expressed in roots, especially in the root elongation zone and lateral roots. In mature portion of the root, expressed in the epidermis and cortex. In the root elongation zone, confined to epidermis. In root tips, present in the root cap, S3 columella and epidermal cells.

The protein resides in the cell membrane. Its function is as follows. Auxin influx transporter that mediates the transport of auxin in roots. Contributes to the basipetal transport in hypocotyls and root tips by establishing an auxin uptake sink in the root cap. Confers sensitivity to 1-N-naphthylphthalamic acid (NPA). Regulates the root elongation, the initiation of lateral roots and the development of root hairs. Can transport IAA, indole-3-propionic acid, NPA syringic acid, vanillic acid and some auxin metabolites, but not 2,4-D and 1-naphthaleneacetic acid. The chain is ABC transporter B family member 4 (ABCB4) from Arabidopsis thaliana (Mouse-ear cress).